Here is a 968-residue protein sequence, read N- to C-terminus: RNA polymerase-associated protein RapA (968 aa).

A Helicase ATP-binding domain is found at 164–334 (DVGRRHAPRV…FARLRLLDPN (171 aa)). 177 to 184 (DEVGLGKT) contacts ATP. The DEAH box motif lies at 280–283 (DEAH). Residues 490 to 662 (RVEWLMGYLT…YLASPDQTEG (173 aa)) form the Helicase C-terminal domain.

The protein belongs to the SNF2/RAD54 helicase family. RapA subfamily. As to quaternary structure, interacts with the RNAP. Has a higher affinity for the core RNAP than for the holoenzyme. Its ATPase activity is stimulated by binding to RNAP.

Its function is as follows. Transcription regulator that activates transcription by stimulating RNA polymerase (RNAP) recycling in case of stress conditions such as supercoiled DNA or high salt concentrations. Probably acts by releasing the RNAP, when it is trapped or immobilized on tightly supercoiled DNA. Does not activate transcription on linear DNA. Probably not involved in DNA repair. The protein is RNA polymerase-associated protein RapA of Shigella dysenteriae serotype 1 (strain Sd197).